Here is a 121-residue protein sequence, read N- to C-terminus: Small ribosomal subunit protein uS13 (121 aa).

Positions 97–121 (VRGQRTRTNARTRRGARKTVAGKKK) are disordered. Over residues 100-121 (QRTRTNARTRRGARKTVAGKKK) the composition is skewed to basic residues.

Belongs to the universal ribosomal protein uS13 family. As to quaternary structure, part of the 30S ribosomal subunit. Forms a loose heterodimer with protein S19. Forms two bridges to the 50S subunit in the 70S ribosome.

Located at the top of the head of the 30S subunit, it contacts several helices of the 16S rRNA. In the 70S ribosome it contacts the 23S rRNA (bridge B1a) and protein L5 of the 50S subunit (bridge B1b), connecting the 2 subunits; these bridges are implicated in subunit movement. Contacts the tRNAs in the A and P-sites. The polypeptide is Small ribosomal subunit protein uS13 (Prochlorococcus marinus (strain MIT 9303)).